Reading from the N-terminus, the 49-residue chain is SPbeta prophage-derived uncharacterized protein YoqT (49 aa).

The helical transmembrane segment at 7–29 threads the bilayer; it reads CFVNWSFDKIMDYILIAGLYFVF.

It localises to the cell membrane. The polypeptide is SPbeta prophage-derived uncharacterized protein YoqT (yoqT) (Bacillus subtilis (strain 168)).